A 119-amino-acid polypeptide reads, in one-letter code: Phosphoribosyl-AMP cyclohydrolase (119 aa).

D77 contacts Mg(2+). C78 contributes to the Zn(2+) binding site. Residues D79 and D81 each coordinate Mg(2+). The Zn(2+) site is built by C94 and C101.

Belongs to the PRA-CH family. As to quaternary structure, homodimer. It depends on Mg(2+) as a cofactor. Zn(2+) serves as cofactor.

The protein resides in the cytoplasm. It carries out the reaction 1-(5-phospho-beta-D-ribosyl)-5'-AMP + H2O = 1-(5-phospho-beta-D-ribosyl)-5-[(5-phospho-beta-D-ribosylamino)methylideneamino]imidazole-4-carboxamide. Its pathway is amino-acid biosynthesis; L-histidine biosynthesis; L-histidine from 5-phospho-alpha-D-ribose 1-diphosphate: step 3/9. Catalyzes the hydrolysis of the adenine ring of phosphoribosyl-AMP. This Cereibacter sphaeroides (strain KD131 / KCTC 12085) (Rhodobacter sphaeroides) protein is Phosphoribosyl-AMP cyclohydrolase.